Consider the following 363-residue polypeptide: 3-dehydroquinate synthase (363 aa).

Residues 72 to 77 (SGEKEK), 130 to 131 (TT), Lys-142, and Lys-151 contribute to the NAD(+) site. Zn(2+) is bound by residues Glu-184, His-247, and His-264.

Belongs to the sugar phosphate cyclases superfamily. Dehydroquinate synthase family. It depends on Co(2+) as a cofactor. Zn(2+) serves as cofactor. NAD(+) is required as a cofactor.

The protein localises to the cytoplasm. It catalyses the reaction 7-phospho-2-dehydro-3-deoxy-D-arabino-heptonate = 3-dehydroquinate + phosphate. The protein operates within metabolic intermediate biosynthesis; chorismate biosynthesis; chorismate from D-erythrose 4-phosphate and phosphoenolpyruvate: step 2/7. Functionally, catalyzes the conversion of 3-deoxy-D-arabino-heptulosonate 7-phosphate (DAHP) to dehydroquinate (DHQ). The polypeptide is 3-dehydroquinate synthase (Bacillus anthracis (strain A0248)).